The chain runs to 215 residues: Protein GET1 (215 aa).

The Lumenal segment spans residues Met-1 to Leu-4. A helical membrane pass occupies residues Ala-5–Ser-24. The Cytoplasmic segment spans residues Val-25 to Leu-108. The stretch at Ala-73–Ser-94 forms a coiled coil. A helical membrane pass occupies residues Trp-109–Phe-129. The Lumenal portion of the chain corresponds to Trp-130–Ser-153. Residues Val-154–Leu-170 traverse the membrane as a helical segment. The Cytoplasmic segment spans residues Gln-171–Asp-215. The segment at Pro-182 to Ala-202 is disordered.

This sequence belongs to the WRB/GET1 family. Interacts with GET3.

The protein localises to the endoplasmic reticulum membrane. In terms of biological role, required for the post-translational delivery of tail-anchored (TA) proteins to the endoplasmic reticulum. Acts as a membrane receptor for soluble GET3, which recognizes and selectively binds the transmembrane domain of TA proteins in the cytosol. This chain is Protein GET1, found in Cryptococcus neoformans var. neoformans serotype D (strain JEC21 / ATCC MYA-565) (Filobasidiella neoformans).